The chain runs to 272 residues: Glutamate racemase (272 aa).

Residues 13–14 (DS) and 45–46 (YG) contribute to the substrate site. Cys76 acts as the Proton donor/acceptor in catalysis. 77–78 (NT) is a binding site for substrate. Cys186 acts as the Proton donor/acceptor in catalysis. 187–188 (TH) lines the substrate pocket.

The protein belongs to the aspartate/glutamate racemases family.

The catalysed reaction is L-glutamate = D-glutamate. It functions in the pathway cell wall biogenesis; peptidoglycan biosynthesis. Functionally, provides the (R)-glutamate required for cell wall biosynthesis. This chain is Glutamate racemase, found in Cupriavidus pinatubonensis (strain JMP 134 / LMG 1197) (Cupriavidus necator (strain JMP 134)).